Reading from the N-terminus, the 56-residue chain is Small ribosomal subunit protein uS14 (56 aa).

Zn(2+)-binding residues include Cys-21, Cys-24, Cys-39, and Cys-42.

This sequence belongs to the universal ribosomal protein uS14 family. Zn(2+) serves as cofactor.

The chain is Small ribosomal subunit protein uS14 (RPS29) from Eremothecium gossypii (strain ATCC 10895 / CBS 109.51 / FGSC 9923 / NRRL Y-1056) (Yeast).